The primary structure comprises 354 residues: Ubiquinol oxidase 1a, mitochondrial (354 aa).

The N-terminal 62 residues, 1–62 (MMITRGGAKA…RAPTIGGMRF (62 aa)), are a transit peptide targeting the mitochondrion. A disordered region spans residues 68–99 (LGEKTPMKEEDANQKKTENESTGGDAAGGNNK). The segment covering 72 to 86 (TPMKEEDANQKKTEN) has biased composition (basic and acidic residues). A helical transmembrane segment spans residues 179 to 199 (AMMLETVAAVPGMVGGMLLHC). Fe cation is bound by residues Glu-183, Glu-222, and His-225. A helical transmembrane segment spans residues 241–261 (ALVITVQGVFFNAYFLGYLIS). Fe cation is bound by residues Glu-273, Glu-324, and His-327.

It belongs to the alternative oxidase family. Homodimer; disulfide-linked. The cofactor is Fe cation. As to expression, expressed in roots, stems, cotyledons, leaves and flowers. High expression in sepals.

It localises to the mitochondrion inner membrane. It catalyses the reaction 2 a ubiquinol + O2 = 2 a ubiquinone + 2 H2O. With respect to regulation, when the two monomeric subunits are covalently linked by a S-S bond, the enzyme is essentially inactive. When the disulfide bond is reduced, its component sulfhydryls can associate with K-keto acids through formation of a thiohemiacetal, resulting in enzyme activation. Activated by glyoxylate, irrespective to the substitution found at Cys-127. That suggests the presence of a second activation site, possibly Cys-177. Catalyzes the cyanide-resistant oxidation of ubiquinol and the reduction of molecular oxygen to water, but does not translocate protons and consequently is not linked to oxidative phosphorylation. Increases respiration when the cytochrome respiratory pathway is restricted, or in response to low temperatures. The protein is Ubiquinol oxidase 1a, mitochondrial (AOX1A) of Arabidopsis thaliana (Mouse-ear cress).